The sequence spans 458 residues: Monomethylamine methyltransferase MtmB1 (458 aa).

O202 is a non-standard amino acid (pyrrolysine).

It belongs to the monomethylamine methyltransferase family.

The enzyme catalyses Co(I)-[methylamine-specific corrinoid protein] + methylamine + H(+) = methyl-Co(III)-[methylamine-specific corrinoid protein] + NH4(+). It participates in one-carbon metabolism; methanogenesis from methylamine. In terms of biological role, catalyzes the transfer of the methyl group from monomethylamine to the corrinoid cofactor of MtmC. The protein is Monomethylamine methyltransferase MtmB1 (mtmB1) of Methanosarcina barkeri (strain Fusaro / DSM 804).